A 353-amino-acid chain; its full sequence is Trans-enoyl reductase fsa3 (353 aa).

Val45 to Lys48 is a binding site for NADP(+). Residue Ile131–Leu138 coordinates substrate. NADP(+) is bound by residues Ser166–Thr169, Ser189–Asn192, Tyr207, and Leu254–Glu255. Substrate is bound at residue Gly275–Leu279. Ile344 to Ser345 contributes to the NADP(+) binding site.

It belongs to the zinc-containing alcohol dehydrogenase family. In terms of assembly, monomer.

It catalyses the reaction L-serine + 7 malonyl-CoA + acetyl-CoA + 2 S-adenosyl-L-methionine + ATP + 8 NADPH + 11 H(+) = (5S)-3-[(2E,6R,8E,10E,12E)-2,6-dimethyltetradeca-2,8,10,12-tetraenoyl]-5-(hydroxymethyl)pyrrolidine-2,4-dione + AMP + 2 S-adenosyl-L-homocysteine + 7 CO2 + diphosphate + 8 NADP(+) + 8 CoA + 6 H2O. It functions in the pathway mycotoxin biosynthesis. In terms of biological role, trans-enoyl reductase; part of the gene cluster that mediates the biosynthesis of HIV-1 integrase inhibitor equisetin and of fusarisetin A, both trans-fused decalin-containing tetramic acids showing also antimicrobial activity. The PKS module of fsa1 together with the enoylreductase fsa3 catalyze the formation of the polyketide unit which is then conjugated to L-serine by the condensation domain of the fsa1 NRPS module. Activity of the Dieckmann cyclase domain (RED) results in release of the Dieckmann product intermediate. Diels-Alderase fsa2 is involved in endo-selective Diels-Alder cycloaddition to form the decalin ring, leading to the production of N-desmethylequisetin also called trichosetin. Subsequent N-methylation is carried out by fsa4 to give equisetin. The enzymatic gene responsible for the conversion of equisetin to fusarisetin A has not been identified yet and is probably located outside of the fsa cluster. The chain is Trans-enoyl reductase fsa3 from Fusarium sp. (strain FN080326).